The following is a 138-amino-acid chain: MPRHHQRGSTASGGSQRQLRVAETVRHAVADILSQGSAHDPDLEGHIITVPEVRMSPDLKLATIYIMPLGGRDTEIVLAALERNKKFLRGEIAHRVNLKFAPDIRFRADERFDEAERIEKLLRTPAVQRDLNSDSEES.

Belongs to the RbfA family. Monomer. Binds 30S ribosomal subunits, but not 50S ribosomal subunits or 70S ribosomes.

Its subcellular location is the cytoplasm. Its function is as follows. One of several proteins that assist in the late maturation steps of the functional core of the 30S ribosomal subunit. Associates with free 30S ribosomal subunits (but not with 30S subunits that are part of 70S ribosomes or polysomes). Required for efficient processing of 16S rRNA. May interact with the 5'-terminal helix region of 16S rRNA. This chain is Ribosome-binding factor A, found in Bradyrhizobium sp. (strain BTAi1 / ATCC BAA-1182).